We begin with the raw amino-acid sequence, 374 residues long: Aminomethyltransferase (374 aa).

Belongs to the GcvT family. As to quaternary structure, the glycine cleavage system is composed of four proteins: P, T, L and H.

The catalysed reaction is N(6)-[(R)-S(8)-aminomethyldihydrolipoyl]-L-lysyl-[protein] + (6S)-5,6,7,8-tetrahydrofolate = N(6)-[(R)-dihydrolipoyl]-L-lysyl-[protein] + (6R)-5,10-methylene-5,6,7,8-tetrahydrofolate + NH4(+). Its function is as follows. The glycine cleavage system catalyzes the degradation of glycine. The protein is Aminomethyltransferase of Prochlorococcus marinus (strain MIT 9313).